The sequence spans 89 residues: uncharacterized protein (89 aa).

Residues 1–19 form the signal peptide; sequence MQLTKTQFVRCVFLLLANS.

This is an uncharacterized protein from Sulfolobus islandicus filamentous virus (isolate Iceland/Hveragerdi) (SIFV).